Consider the following 292-residue polypeptide: Tetratricopeptide repeat protein 1 (292 aa).

Positions threonine 23 to glutamate 125 are disordered. 2 stretches are compositionally biased toward basic and acidic residues: residues leucine 45–glutamate 55 and glycine 75–glutamate 85. Residues serine 83 and serine 90 each carry the phosphoserine modification. Residues glutamate 99–glutamate 125 are compositionally biased toward basic and acidic residues. 3 TPR repeats span residues serine 116–cysteine 149, serine 155–tyrosine 188, and isoleucine 189–isoleucine 222.

Interacts with the GAP domain of NF1. Interacts (via TPR repeats) with HSP90AA1 and HSPA8.

This is Tetratricopeptide repeat protein 1 (TTC1) from Homo sapiens (Human).